We begin with the raw amino-acid sequence, 262 residues long: 2-keto-4-pentenoate hydratase 2 (262 aa).

The protein belongs to the hydratase/decarboxylase family. MhpD subfamily. The cofactor is a divalent metal cation.

It carries out the reaction (S)-4-hydroxy-2-oxopentanoate = (2Z)-2-hydroxypenta-2,4-dienoate + H2O. Its pathway is aromatic compound metabolism; 3-phenylpropanoate degradation. In terms of biological role, catalyzes the conversion of 2-hydroxypentadienoic acid (enolic form of 2-oxopent-4-enoate) to 4-hydroxy-2-ketopentanoic acid. The chain is 2-keto-4-pentenoate hydratase 2 from Dechloromonas aromatica (strain RCB).